Consider the following 215-residue polypeptide: 3-isopropylmalate dehydratase small subunit (215 aa).

The protein belongs to the LeuD family. LeuD type 1 subfamily. As to quaternary structure, heterodimer of LeuC and LeuD.

It catalyses the reaction (2R,3S)-3-isopropylmalate = (2S)-2-isopropylmalate. The protein operates within amino-acid biosynthesis; L-leucine biosynthesis; L-leucine from 3-methyl-2-oxobutanoate: step 2/4. Functionally, catalyzes the isomerization between 2-isopropylmalate and 3-isopropylmalate, via the formation of 2-isopropylmaleate. The chain is 3-isopropylmalate dehydratase small subunit from Polynucleobacter asymbioticus (strain DSM 18221 / CIP 109841 / QLW-P1DMWA-1) (Polynucleobacter necessarius subsp. asymbioticus).